Reading from the N-terminus, the 189-residue chain is Ras-like protein rasC (189 aa).

11 to 18 (GDGGVGKS) contacts GTP. The Effector region signature appears at 33-41 (YDPTIENSY). Residues 58 to 62 (DTAGQ) and 117 to 120 (NKAD) contribute to the GTP site. A Cysteine methyl ester modification is found at C186. Residue C186 is the site of S-geranylgeranyl cysteine attachment. Residues 187–189 (IIL) constitute a propeptide, removed in mature form.

The protein belongs to the small GTPase superfamily. Ras family.

The protein localises to the cell membrane. It carries out the reaction GTP + H2O = GDP + phosphate + H(+). With respect to regulation, alternates between an inactive form bound to GDP and an active form bound to GTP. Activated by a guanine nucleotide-exchange factor (GEF) and inactivated by a GTPase-activating protein (GAP). Ras proteins bind GDP/GTP and possess intrinsic GTPase activity. The sequence is that of Ras-like protein rasC (rasC) from Dictyostelium discoideum (Social amoeba).